Reading from the N-terminus, the 76-residue chain is Ovarian cancer-related protein 1 (76 aa).

In Homo sapiens (Human), this protein is Ovarian cancer-related protein 1 (OCR1).